The chain runs to 263 residues: Hydroxyethylthiazole kinase (263 aa).

Methionine 39 contacts substrate. Residues lysine 115 and threonine 160 each contribute to the ATP site. A substrate-binding site is contributed by glycine 187.

The protein belongs to the Thz kinase family. Mg(2+) serves as cofactor.

It carries out the reaction 5-(2-hydroxyethyl)-4-methylthiazole + ATP = 4-methyl-5-(2-phosphooxyethyl)-thiazole + ADP + H(+). It participates in cofactor biosynthesis; thiamine diphosphate biosynthesis; 4-methyl-5-(2-phosphoethyl)-thiazole from 5-(2-hydroxyethyl)-4-methylthiazole: step 1/1. Its function is as follows. Catalyzes the phosphorylation of the hydroxyl group of 4-methyl-5-beta-hydroxyethylthiazole (THZ). This is Hydroxyethylthiazole kinase from Staphylococcus saprophyticus subsp. saprophyticus (strain ATCC 15305 / DSM 20229 / NCIMB 8711 / NCTC 7292 / S-41).